A 118-amino-acid chain; its full sequence is Late cornified envelope protein 1F (118 aa).

Residues 1–10 (MSCQQSQQQC) show a composition bias toward low complexity. Disordered regions lie at residues 1–23 (MSCQQSQQQCQPPPKCTPKCPPK) and 82–118 (RRRSHRHRPQSSDCCSQPSAGSSCCGGGSGQHSGGCC). A compositionally biased stretch (pro residues) spans 11–23 (QPPPKCTPKCPPK). The span at 95-104 (CCSQPSAGSS) shows a compositional bias: low complexity. The span at 105 to 118 (CCGGGSGQHSGGCC) shows a compositional bias: gly residues.

Belongs to the LCE family. As to expression, skin-specific. Expression was readily detected in adult trunk skin, adult arm skin, fetal skin, penal skin, vulva, esophagus and tongue. Not expressed in the cervix, rectum, lung, colon, or placenta. Expression is observed in the fibroblasts.

Its function is as follows. Precursors of the cornified envelope of the stratum corneum. The sequence is that of Late cornified envelope protein 1F (LCE1F) from Homo sapiens (Human).